The primary structure comprises 320 residues: Taste receptor type 2 member 109 (320 aa).

At 1-14 the chain is on the extracellular side; it reads MEHFLKSIFDISKN. A helical membrane pass occupies residues 15–35; the sequence is VLPIILFIELIIGIIGNGFMA. Over 36-62 the chain is Cytoplasmic; that stretch reads LVHCMDWVKRKKMSLVNQILTTLATSR. Residues 63-83 form a helical membrane-spanning segment; sequence ICLLWFMLLGLLITLLDPDLA. Residues 84-94 are Extracellular-facing; the sequence is SARMMIQVASN. The chain crosses the membrane as a helical span at residues 95–115; that stretch reads LWIIANHMSIWLATCLTVFYF. Residues 116 to 135 are Cytoplasmic-facing; sequence LKIANFSSSLFLYLKWRVEK. A helical transmembrane segment spans residues 136–156; that stretch reads VISVIFLVSLVLLFLNMLLMN. The Extracellular segment spans residues 157 to 191; that stretch reads LENDMCIAEYHQINISYSFIYHYRADCERRVLRLH. N-linked (GlcNAc...) asparagine glycosylation occurs at Asn-170. Residues 192 to 212 form a helical membrane-spanning segment; the sequence is IIILSVPFVLSLPTFLLLIFS. Topologically, residues 213 to 240 are cytoplasmic; that stretch reads LWTHHKKMQQHVQGRRDASTTAHFKALQ. A helical transmembrane segment spans residues 241–261; sequence TVIAFLLLYCIFILSMLLQFW. Residues 262-270 are Extracellular-facing; it reads KYELMKKPL. The helical transmembrane segment at 271–291 threads the bilayer; it reads FILFCHIVYGAFPSFHSYVLI. Over 292-320 the chain is Cytoplasmic; the sequence is LGDMKLRQASLSVLLWLKCRPNYIETLDL.

This sequence belongs to the G-protein coupled receptor T2R family.

Its subcellular location is the membrane. Its function is as follows. Putative taste receptor which may play a role in the perception of bitterness. This chain is Taste receptor type 2 member 109, found in Rattus norvegicus (Rat).